The chain runs to 344 residues: L-rhamnose-proton symporter (344 aa).

A run of 10 helical transmembrane segments spans residues 4 to 24 (AITM…CFYA), 38 to 58 (WSVG…ALLL), 68 to 88 (FSLS…IGNI), 101 to 121 (MGIG…TPII), 137 to 157 (TLLG…AGQL), 175 to 195 (LVLA…MNAA), 214 to 234 (LPSY…FCFI), 259 to 279 (VLLS…YAWG), 290 to 310 (ISWM…GLVL), and 323 to 343 (VLSL…IGMA).

Belongs to the L-rhamnose transporter (TC 2.A.7.6) family.

It localises to the cell inner membrane. The enzyme catalyses L-rhamnopyranose(in) + H(+)(in) = L-rhamnopyranose(out) + H(+)(out). Uptake of L-rhamnose across the cytoplasmic membrane with the concomitant transport of protons into the cell (symport system). This chain is L-rhamnose-proton symporter, found in Escherichia coli O127:H6 (strain E2348/69 / EPEC).